Consider the following 1292-residue polypeptide: ABC multidrug transporter MDR5 (1292 aa).

A disordered region spans residues 1 to 43 (MTEEPKPVTPVLRDGEAGLDTTAPTEAGSLGEEAPKKEADGIV). The next 2 helical transmembrane spans lie at 79-99 (ICGF…TIIF) and 128-148 (LWFV…TICF). The 290-residue stretch at 81–370 (GFFAAVASGT…IAPTLGEFTK (290 aa)) folds into the ABC transmembrane type-1 1 domain. N-linked (GlcNAc...) asparagine glycosylation occurs at Asn149. The next 4 helical transmembrane spans lie at 202 to 222 (VGTC…AFTQ), 226 to 246 (LTLP…ITVA), 314 to 334 (EFFI…KLLL), and 344 to 364 (ILTV…IAPT). Residues 405–650 (LELSNAVFSY…KGQYWSLVNA (246 aa)) form the ABC transporter 1 domain. 440–447 (GASGSGKS) is a binding site for ATP. Asn494 is a glycosylation site (N-linked (GlcNAc...) asparagine). Residues 656–691 (ASDDSSSDTDKETDTQPAEILEKHATTKSTHSKVPH) form a disordered region. Over residues 663–680 (DTDKETDTQPAEILEKHA) the composition is skewed to basic and acidic residues. Helical transmembrane passes span 720–740 (HWLF…AFPA) and 768–788 (LMFF…GFFL). The region spanning 725–1012 (LLGGIASVVS…IFGFTMNTTK (288 aa)) is the ABC transmembrane type-1 2 domain. A glycan (N-linked (GlcNAc...) asparagine) is linked at Asn820. The next 4 helical transmembrane spans lie at 844–864 (IGLI…ALVT), 866–886 (WKLA…AGFI), 949–969 (IAMI…ALAF), and 986–1006 (FFVI…IFGF). N-linked (GlcNAc...) asparagine glycans are attached at residues Asn1009, Asn1031, and Asn1052. An ABC transporter 2 domain is found at 1048–1285 (VEFRNVSFSY…KGRYFEMCKA (238 aa)). 1083 to 1090 (GPSGCGKT) provides a ligand contact to ATP.

It belongs to the ABC transporter superfamily. ABCB family. Multidrug resistance exporter (TC 3.A.1.201) subfamily.

Its subcellular location is the cell membrane. The enzyme catalyses itraconazole(in) + ATP + H2O = itraconazole(out) + ADP + phosphate + H(+). Functionally, pleiotropic ABC efflux transporter involved in the modulation susceptibility to itraconazole. This Trichophyton rubrum (strain ATCC MYA-4607 / CBS 118892) (Athlete's foot fungus) protein is ABC multidrug transporter MDR5.